The sequence spans 137 residues: Small ribosomal subunit protein uS12 (137 aa).

The disordered stretch occupies residues methionine 1–lysine 57. Aspartate 102 carries the post-translational modification 3-methylthioaspartic acid.

Belongs to the universal ribosomal protein uS12 family. In terms of assembly, part of the 30S ribosomal subunit. Contacts proteins S8 and S17. May interact with IF1 in the 30S initiation complex.

In terms of biological role, with S4 and S5 plays an important role in translational accuracy. Its function is as follows. Interacts with and stabilizes bases of the 16S rRNA that are involved in tRNA selection in the A site and with the mRNA backbone. Located at the interface of the 30S and 50S subunits, it traverses the body of the 30S subunit contacting proteins on the other side and probably holding the rRNA structure together. The combined cluster of proteins S8, S12 and S17 appears to hold together the shoulder and platform of the 30S subunit. The polypeptide is Small ribosomal subunit protein uS12 (Streptococcus gordonii (strain Challis / ATCC 35105 / BCRC 15272 / CH1 / DL1 / V288)).